Consider the following 84-residue polypeptide: MVKLRLKRYGRKQQNTYRIVAIDAQSRREGRALEEVGFYNLRKDQTQLDILAIVNLIREGAQPTETVYDILRKAGIFERIKANP.

Belongs to the bacterial ribosomal protein bS16 family.

Its subcellular location is the plastid. The protein localises to the chloroplast. This is Small ribosomal subunit protein bS16c from Anthoceros angustus (Hornwort).